A 619-amino-acid polypeptide reads, in one-letter code: Probable ATP-dependent RNA helicase DDX59 (619 aa).

Positions 1 to 101 (MFVPRSLKIK…KSFSKTQRWP (101 aa)) are disordered. Over residues 12 to 27 (SSNDDLKSGEAKKSKP) the composition is skewed to basic and acidic residues. Lysine 26 participates in a covalent cross-link: Glycyl lysine isopeptide (Lys-Gly) (interchain with G-Cter in SUMO2). Over residues 59–76 (ASSTNSPSCQLAEVSSTG) the composition is skewed to polar residues. Position 64 is a phosphoserine (serine 64). Residues 79-91 (EGVKDSHPSEEPV) show a composition bias toward basic and acidic residues. The segment at 104–133 (GEPVCVVCGRYGEYICDKTDEDVCSLECKA) adopts an HIT-type zinc-finger fold. Residue serine 160 is modified to Phosphoserine. A Q motif motif is present at residues 203-231 (IDFEHCGFPETLNQNLKKSGYEVPTPIQM). A Helicase ATP-binding domain is found at 234–405 (IPVGLLGRDI…DQLLHNPVRI (172 aa)). 247 to 254 (ADTGSGKT) contacts ATP. The short motif at 353-356 (DEAD) is the DEAD box element. The Helicase C-terminal domain occupies 416-579 (SVRQIILWVE…ILPPQLLNSP (164 aa)). Basic and acidic residues predominate over residues 583–594 (EQKRKEQQKDRQ). Residues 583 to 603 (EQKRKEQQKDRQTQNSLVTGA) form a disordered region.

Belongs to the DEAD box helicase family. DDX59 subfamily. In terms of assembly, interacts (via HIT-type zinc finger) with the RUVBL1/RUVBL2 complex in the presence of ADP.

It localises to the cytoplasm. It is found in the nucleus. The enzyme catalyses ATP + H2O = ADP + phosphate + H(+). The sequence is that of Probable ATP-dependent RNA helicase DDX59 (Ddx59) from Mus musculus (Mouse).